The chain runs to 218 residues: Ras-related protein Rab-4A (218 aa).

The GDP site is built by glycine 23, threonine 24, glycine 25, lysine 26, serine 27, and cysteine 28. Residues glycine 23, threonine 24, glycine 25, lysine 26, serine 27, cysteine 28, serine 42, histidine 44, and threonine 45 each coordinate GTP. Residue serine 27 coordinates Mg(2+). Positions 44 to 49 match the Switch 1 motif; the sequence is HTIGVE. Residues threonine 45 and aspartate 68 each contribute to the Mg(2+) site. A Switch 2 motif is present at residues 70-79; the sequence is AGQERFRSVT. Glycine 71 lines the GTP pocket. Glutamine 72 is modified (5-glutamyl serotonin). The GDP site is built by asparagine 126, lysine 127, aspartate 129, alanine 157, and leucine 158. Asparagine 126, lysine 127, aspartate 129, alanine 157, and leucine 158 together coordinate GTP. The residue at position 190 (serine 190) is a Phosphoserine. Residue serine 204 is modified to Phosphoserine; by CDK1. S-geranylgeranyl cysteine attachment occurs at residues cysteine 216 and cysteine 218. Cysteine methyl ester is present on cysteine 218.

The protein belongs to the small GTPase superfamily. Rab family. In terms of assembly, interacts with SGSM1, SGSM2 and SGSM3. Interacts with RAB11FIP1, RABEP1, ZFYVE20 and RUFY1. Interacts (membrane-bound form) with NDRG1; the interaction involves NDRG1 in vesicular recycling of E-cadherin. Interacts (in GTP-bound form) with GRIPAP1 (via N-terminus). Interacts with RABEP1 and RBSN. Does not interact with HPS4. Interacts with RABEP2; this interaction may mediate VEGFR2 cell surface expression. Mg(2+) serves as cofactor. Phosphorylated by CDK1 kinase during mitosis. In terms of processing, serotonylation of Gln-72 by TGM2 during activation and aggregation of platelets leads to constitutive activation of GTPase activity.

It localises to the membrane. The protein resides in the cytoplasm. Its subcellular location is the early endosome membrane. The protein localises to the recycling endosome membrane. It carries out the reaction GTP + H2O = GDP + phosphate + H(+). With respect to regulation, regulated by guanine nucleotide exchange factors (GEFs) which promote the exchange of bound GDP for free GTP. Regulated by GTPase activating proteins (GAPs) which increase the GTP hydrolysis activity. Inhibited by GDP dissociation inhibitors (GDIs). In terms of biological role, the small GTPases Rab are key regulators of intracellular membrane trafficking, from the formation of transport vesicles to their fusion with membranes. Rabs cycle between an inactive GDP-bound form and an active GTP-bound form that is able to recruit to membranes different sets of downstream effectors directly responsible for vesicle formation, movement, tethering and fusion. RAB4A is involved in protein transport. Also plays a role in vesicular traffic. Mediates VEGFR2 endosomal trafficking to enhance VEGFR2 signaling. Acts as a regulator of platelet alpha-granule release during activation and aggregation of platelets. This Homo sapiens (Human) protein is Ras-related protein Rab-4A.